The primary structure comprises 512 residues: MLSKIMASKSQSVCSFKKYKNFFMNNVRLLRESILLNTNHDVVTEQKCHKSDQNPKRSRAKIQKRYNSEKKHACCVSNLHLTCVEVSLSSSSPSQSDPRTVDNDSSVARKKRVTAYLQQVECDEDFFKDLRLPTKHSETDKWTLVYVPRVFSDCDSYCARPRKRLLGAGSYGEAYLTDRGVTKKVFSNSEILAEAYMLANIIQVEGWEIHAAHLRIANSICFRHNTVSYTFYKTDLYHFNAHSVDALENYRYTFRQLCDAICFLNLRCKLVHADVSASNILINTDEEYILHAVLGDYSLCSRHDRERAIIIMNENNGKSLGVCQSDLQVEGTYQIVYRPLHLMFWCVTMRTLSIWQLCREAREFCVMDLCALGRVATLFTLHLISHETSVSVRRGLFSVHKKYEKEKTANGHKVEYGIHVILNSLWIVTCLCPTFYKQSGISMMTKLIEAFPQHEKCLNTYTKWLGEELPFRGVGIILENKYGQELLDFISKTSGVDDFRKPLGPIFETLTV.

Aspartate 274 acts as the Proton acceptor in catalysis.

Belongs to the protein kinase superfamily. Tyr protein kinase family.

It catalyses the reaction L-tyrosyl-[protein] + ATP = O-phospho-L-tyrosyl-[protein] + ADP + H(+). This chain is Phosphotransferase UL97 homolog, found in Elephantid herpesvirus 1 (isolate Asian elephant/Berlin/Kiba/1998) (EIHV-1).